The chain runs to 105 residues: Neuropeptide-like protein 32 (105 aa).

A signal peptide spans 1-22 (MRQFNLLLVFCLIALTALPVFS). A propeptide spanning residues 23–54 (FPNGLTMDSIDMEPMGAFDENGAADESPRVKR) is cleaved from the precursor. A Glycine amide modification is found at Gly-59. Residue Trp-64 is modified to Tryptophan amide. Residues Gly-68, Gly-73, and Gly-80 each carry the glycine amide modification. Tryptophan amide is present on Trp-86. 2 positions are modified to glycine amide: Gly-91 and Gly-98. Trp-103 is subject to Tryptophan amide.

Belongs to the YARP (YGGW-amide related peptide) family.

Its subcellular location is the secreted. In terms of biological role, may have antimicrobial activity. The protein is Neuropeptide-like protein 32 (nlp-32) of Caenorhabditis elegans.